The sequence spans 209 residues: ATP-dependent Clp protease proteolytic subunit (209 aa).

The active-site Nucleophile is Ser113. His138 is a catalytic residue.

It belongs to the peptidase S14 family. As to quaternary structure, fourteen ClpP subunits assemble into 2 heptameric rings which stack back to back to give a disk-like structure with a central cavity, resembling the structure of eukaryotic proteasomes.

It localises to the cytoplasm. It carries out the reaction Hydrolysis of proteins to small peptides in the presence of ATP and magnesium. alpha-casein is the usual test substrate. In the absence of ATP, only oligopeptides shorter than five residues are hydrolyzed (such as succinyl-Leu-Tyr-|-NHMec, and Leu-Tyr-Leu-|-Tyr-Trp, in which cleavage of the -Tyr-|-Leu- and -Tyr-|-Trp bonds also occurs).. Cleaves peptides in various proteins in a process that requires ATP hydrolysis. Has a chymotrypsin-like activity. Plays a major role in the degradation of misfolded proteins. This Blochmanniella floridana protein is ATP-dependent Clp protease proteolytic subunit.